The sequence spans 180 residues: Dephospho-CoA kinase (180 aa).

Residues 2–180 (VIGVTGKIGT…VMKLVWEKRE (179 aa)) form the DPCK domain. 10 to 15 (GTGKST) contributes to the ATP binding site.

Belongs to the CoaE family.

The protein localises to the cytoplasm. It catalyses the reaction 3'-dephospho-CoA + ATP = ADP + CoA + H(+). The protein operates within cofactor biosynthesis; coenzyme A biosynthesis; CoA from (R)-pantothenate: step 5/5. In terms of biological role, catalyzes the phosphorylation of the 3'-hydroxyl group of dephosphocoenzyme A to form coenzyme A. This Thermotoga maritima (strain ATCC 43589 / DSM 3109 / JCM 10099 / NBRC 100826 / MSB8) protein is Dephospho-CoA kinase.